A 245-amino-acid chain; its full sequence is Uridylate kinase (245 aa).

An ATP-binding site is contributed by 15–18 (KLSG). Positions 23–28 (GDEGFG) are involved in allosteric activation by GTP. G57 provides a ligand contact to UMP. ATP-binding residues include G58 and R62. Residues D77 and 138–145 (TGNPFCTT) each bind UMP. Positions 165, 171, and 174 each coordinate ATP.

The protein belongs to the UMP kinase family. As to quaternary structure, homohexamer.

It localises to the cytoplasm. It catalyses the reaction UMP + ATP = UDP + ADP. The protein operates within pyrimidine metabolism; CTP biosynthesis via de novo pathway; UDP from UMP (UMPK route): step 1/1. With respect to regulation, allosterically activated by GTP. Inhibited by UTP. Functionally, catalyzes the reversible phosphorylation of UMP to UDP. The sequence is that of Uridylate kinase from Shewanella sp. (strain W3-18-1).